The following is a 162-amino-acid chain: Zinc finger protein ZAT12 (162 aa).

C2H2-type zinc fingers lie at residues 39–61 (FTCK…RASH) and 82–104 (HPCP…MRRH).

Expressed in roots, stems and flowers.

The protein resides in the nucleus. Transcriptional repressor involved in light acclimation, cold and oxidative stress responses. May regulate a collection of transcripts involved in response to high-light, cold and oxidative stress. The sequence is that of Zinc finger protein ZAT12 (ZAT12) from Arabidopsis thaliana (Mouse-ear cress).